A 333-amino-acid chain; its full sequence is Heat shock transcription factor, X-linked member 3 (333 aa).

Positions 1–66 (MASQNTEQEY…QDNSPPEDRN (66 aa)) are disordered. The segment covering 29-39 (GSSPDPNPDSS) has biased composition (low complexity). Residues 49 to 60 (AMSQDPGSQDNS) show a composition bias toward polar residues. The DNA-binding element occupies 79 to 182 (FRLSFPRKLW…PRLLENIQRK (104 aa)). The interval 227–275 (QGAPSVQGPSGTQSFRRSGMWSKKSATRHPLGNGPPQEPNGPSWEGTSG) is disordered. Residues 228-242 (GAPSVQGPSGTQSFR) are compositionally biased toward polar residues.

It belongs to the HSF family.

It localises to the nucleus. This is Heat shock transcription factor, X-linked member 3 from Homo sapiens (Human).